The sequence spans 218 residues: Small ribosomal subunit protein uS3c (218 aa).

One can recognise a KH type-2 domain in the interval 47-118; it reads VQKNMRTSSG…KLNIAVTRIA (72 aa).

Belongs to the universal ribosomal protein uS3 family. In terms of assembly, part of the 30S ribosomal subunit.

It localises to the plastid. It is found in the chloroplast. The sequence is that of Small ribosomal subunit protein uS3c (rps3) from Nicotiana tomentosiformis (Tobacco).